A 147-amino-acid chain; its full sequence is Ubiquitin-conjugating enzyme E2-16 kDa (147 aa).

The UBC core domain maps to 1–147; that stretch reads MALKRINKEL…AREWTRKYAI (147 aa). Residue C107 is the Glycyl thioester intermediate of the active site.

This sequence belongs to the ubiquitin-conjugating enzyme family.

It catalyses the reaction S-ubiquitinyl-[E1 ubiquitin-activating enzyme]-L-cysteine + [E2 ubiquitin-conjugating enzyme]-L-cysteine = [E1 ubiquitin-activating enzyme]-L-cysteine + S-ubiquitinyl-[E2 ubiquitin-conjugating enzyme]-L-cysteine.. The protein operates within protein modification; protein ubiquitination. Catalyzes the covalent attachment of ubiquitin to other proteins. In Pyricularia oryzae (strain 70-15 / ATCC MYA-4617 / FGSC 8958) (Rice blast fungus), this protein is Ubiquitin-conjugating enzyme E2-16 kDa (UBC1).